The primary structure comprises 254 residues: Cobalt transport protein CbiM (254 aa).

The N-terminal stretch at 1–31 (MKTILRPFTLLSRSIFLALFVLFLWSPDAHA) is a signal peptide. A run of 6 helical transmembrane segments spans residues 37–57 (GFLP…FLVV), 74–94 (LLLA…IPSV), 106–126 (LGAV…VLLF), 128–148 (ALLL…SMAI), 169–189 (WLAV…VTSL), and 212–232 (IFAL…VMVF).

This sequence belongs to the CbiM family. Forms an energy-coupling factor (ECF) transporter complex composed of an ATP-binding protein (A component, CbiO), a transmembrane protein (T component, CbiQ) and 2 possible substrate-capture proteins (S components, CbiM and CbiN) of unknown stoichimetry.

The protein localises to the cell inner membrane. It participates in cofactor biosynthesis; adenosylcobalamin biosynthesis. Functionally, part of the energy-coupling factor (ECF) transporter complex CbiMNOQ involved in cobalt import. This chain is Cobalt transport protein CbiM, found in Chlorobium limicola (strain DSM 245 / NBRC 103803 / 6330).